A 160-amino-acid polypeptide reads, in one-letter code: Transcriptional repressor NrdR (160 aa).

The segment at 3–34 is a zinc-finger region; the sequence is CPFCRHADTQVVDSRVSEDGATIRRRRRCPAC. The 91-residue stretch at 49–139 folds into the ATP-cone domain; sequence PSVVKKDGSR…VYRRFEDVSE (91 aa).

The protein belongs to the NrdR family. Zn(2+) serves as cofactor.

Functionally, negatively regulates transcription of bacterial ribonucleotide reductase nrd genes and operons by binding to NrdR-boxes. The protein is Transcriptional repressor NrdR of Paraburkholderia phytofirmans (strain DSM 17436 / LMG 22146 / PsJN) (Burkholderia phytofirmans).